Here is a 122-residue protein sequence, read N- to C-terminus: Large ribosomal subunit protein uL14 (122 aa).

This sequence belongs to the universal ribosomal protein uL14 family. As to quaternary structure, part of the 50S ribosomal subunit. Forms a cluster with proteins L3 and L19. In the 70S ribosome, L14 and L19 interact and together make contacts with the 16S rRNA in bridges B5 and B8.

Functionally, binds to 23S rRNA. Forms part of two intersubunit bridges in the 70S ribosome. The sequence is that of Large ribosomal subunit protein uL14 from Carboxydothermus hydrogenoformans (strain ATCC BAA-161 / DSM 6008 / Z-2901).